We begin with the raw amino-acid sequence, 157 residues long: 6,7-dimethyl-8-ribityllumazine synthase (157 aa).

Residues Phe-22, 57–59 (AYE), and 81–83 (TVI) each bind 5-amino-6-(D-ribitylamino)uracil. 86–87 (GT) is a binding site for (2S)-2-hydroxy-3-oxobutyl phosphate. His-89 serves as the catalytic Proton donor. Phe-114 is a binding site for 5-amino-6-(D-ribitylamino)uracil. Arg-128 is a binding site for (2S)-2-hydroxy-3-oxobutyl phosphate.

The protein belongs to the DMRL synthase family. In terms of assembly, forms an icosahedral capsid composed of 60 subunits, arranged as a dodecamer of pentamers.

It carries out the reaction (2S)-2-hydroxy-3-oxobutyl phosphate + 5-amino-6-(D-ribitylamino)uracil = 6,7-dimethyl-8-(1-D-ribityl)lumazine + phosphate + 2 H2O + H(+). It participates in cofactor biosynthesis; riboflavin biosynthesis; riboflavin from 2-hydroxy-3-oxobutyl phosphate and 5-amino-6-(D-ribitylamino)uracil: step 1/2. Its function is as follows. Catalyzes the formation of 6,7-dimethyl-8-ribityllumazine by condensation of 5-amino-6-(D-ribitylamino)uracil with 3,4-dihydroxy-2-butanone 4-phosphate. This is the penultimate step in the biosynthesis of riboflavin. The polypeptide is 6,7-dimethyl-8-ribityllumazine synthase (Pasteurella multocida (strain Pm70)).